The sequence spans 369 residues: Putative 2-aminoethylphosphonate import ATP-binding protein PhnT (369 aa).

The region spanning 19–250 (IVLDSLRVAY…PPNRFASEFL (232 aa)) is the ABC transporter domain. 51–58 (GPSGSGKT) lines the ATP pocket.

It belongs to the ABC transporter superfamily. 2-aminoethylphosphonate importer (TC 3.A.1.11.5) family.

It localises to the cell inner membrane. In terms of biological role, probably part of the PhnSTUV complex (TC 3.A.1.11.5) involved in 2-aminoethylphosphonate import. Probably responsible for energy coupling to the transport system. This Salmonella choleraesuis (strain SC-B67) protein is Putative 2-aminoethylphosphonate import ATP-binding protein PhnT (phnT).